The chain runs to 551 residues: DNA double-strand break repair helicase HerA (551 aa).

ATP is bound by residues R152, 161 to 166 (GAGKSN), and 507 to 508 (RI).

This sequence belongs to the HerA family. Homohexamer. Interacts with NurA.

The enzyme catalyses Couples ATP hydrolysis with the unwinding of duplex DNA at the replication fork by translocating in the 5'-3' direction. This creates two antiparallel DNA single strands (ssDNA). The leading ssDNA polymer is the template for DNA polymerase III holoenzyme which synthesizes a continuous strand.. It catalyses the reaction ATP + H2O = ADP + phosphate + H(+). The catalysed reaction is Couples ATP hydrolysis with the unwinding of duplex DNA by translocating in the 3'-5' direction.. Helicase activity is stimulated in the presence of NurA. In terms of biological role, involved in DNA double-strand break (DSB) repair. Probably acts with NurA to stimulate resection of the 5' strand and produce the long 3' single-strand that is required for RadA loading. Has DNA-dependent ATPase activity and DNA helicase activity. The polypeptide is DNA double-strand break repair helicase HerA (Pyrococcus furiosus (strain ATCC 43587 / DSM 3638 / JCM 8422 / Vc1)).